The following is a 412-amino-acid chain: Isocitrate dehydrogenase [NADP] cytoplasmic (412 aa).

Residues 76–78 and arginine 83 contribute to the NADP(+) site; that span reads TIT. Substrate is bound at residue threonine 78. Residues 95–101, arginine 110, and arginine 133 contribute to the substrate site; that span reads SPNGTIR. Aspartate 253 provides a ligand contact to Mn(2+). Lysine 261 contacts NADP(+). Aspartate 276 contributes to the Mn(2+) binding site. Residues 309–314 and asparagine 327 each bind NADP(+); that span reads GTVTRH.

This sequence belongs to the isocitrate and isopropylmalate dehydrogenases family. In terms of assembly, homodimer. Mg(2+) serves as cofactor. Mn(2+) is required as a cofactor.

It is found in the cytoplasm. The enzyme catalyses D-threo-isocitrate + NADP(+) = 2-oxoglutarate + CO2 + NADPH. The chain is Isocitrate dehydrogenase [NADP] cytoplasmic (idhC) from Dictyostelium discoideum (Social amoeba).